Here is a 340-residue protein sequence, read N- to C-terminus: Cell division protein FtsQ (340 aa).

The interval M1–P41 is disordered. The Cytoplasmic segment spans residues M1–P55. Residues P19–P32 show a composition bias toward pro residues. A helical transmembrane segment spans residues L56–L78. Over S79–G340 the chain is Periplasmic. Residues F104–R172 enclose the POTRA domain. The interval R308–G340 is disordered. Positions A324 to A333 are enriched in low complexity.

Belongs to the FtsQ/DivIB family. FtsQ subfamily.

Its subcellular location is the cell inner membrane. Functionally, essential cell division protein. This is Cell division protein FtsQ from Paracoccus denitrificans (strain Pd 1222).